The sequence spans 432 residues: Trigger factor (432 aa).

One can recognise a PPIase FKBP-type domain in the interval 161-246 (EDRVTIDFTG…LKKVEERELP (86 aa)).

The protein belongs to the FKBP-type PPIase family. Tig subfamily. In terms of assembly, homodimer and monomer. In vivo most of the ribosomes are in complex with monomeric TF. Uncomplexed TF, however, is in a monomer-dimer equilibrium with approximately two thirds of TF existing in a dimeric state.

The protein localises to the cytoplasm. The enzyme catalyses [protein]-peptidylproline (omega=180) = [protein]-peptidylproline (omega=0). Functionally, involved in protein export. Acts as a chaperone by maintaining the newly synthesized protein in an open conformation. Functions as a peptidyl-prolyl cis-trans isomerase. The protein is Trigger factor of Shigella boydii serotype 4 (strain Sb227).